The sequence spans 536 residues: Phosphoenolpyruvate carboxykinase (ATP) (536 aa).

Residues arginine 62, tyrosine 203, and lysine 209 each coordinate substrate. ATP-binding positions include lysine 209, histidine 228, and 244–252; that span reads GLSGTGKTT. 2 residues coordinate Mn(2+): lysine 209 and histidine 228. Aspartate 265 contributes to the Mn(2+) binding site. Residues glutamate 293, arginine 329, 445-446, and threonine 451 contribute to the ATP site; that span reads RI. Arginine 329 is a substrate binding site.

This sequence belongs to the phosphoenolpyruvate carboxykinase (ATP) family. As to quaternary structure, monomer. Requires Mn(2+) as cofactor.

The protein resides in the cytoplasm. The enzyme catalyses oxaloacetate + ATP = phosphoenolpyruvate + ADP + CO2. It functions in the pathway carbohydrate biosynthesis; gluconeogenesis. Involved in the gluconeogenesis. Catalyzes the conversion of oxaloacetate (OAA) to phosphoenolpyruvate (PEP) through direct phosphoryl transfer between the nucleoside triphosphate and OAA. The sequence is that of Phosphoenolpyruvate carboxykinase (ATP) from Actinobacillus pleuropneumoniae serotype 5b (strain L20).